We begin with the raw amino-acid sequence, 441 residues long: Ribosomal protein uS12 methylthiotransferase RimO (441 aa).

The region spanning 8-118 (PKIGFVSLGC…VLEHVHHYVP (111 aa)) is the MTTase N-terminal domain. Residues C17, C53, C82, C150, C154, and C157 each coordinate [4Fe-4S] cluster. A Radical SAM core domain is found at 136–373 (LTPRHYAYLK…MQLQQQISAE (238 aa)). Positions 376-441 (QEKVGREILV…DEYDLWGSRV (66 aa)) constitute a TRAM domain.

The protein belongs to the methylthiotransferase family. RimO subfamily. The cofactor is [4Fe-4S] cluster.

It localises to the cytoplasm. The enzyme catalyses L-aspartate(89)-[ribosomal protein uS12]-hydrogen + (sulfur carrier)-SH + AH2 + 2 S-adenosyl-L-methionine = 3-methylsulfanyl-L-aspartate(89)-[ribosomal protein uS12]-hydrogen + (sulfur carrier)-H + 5'-deoxyadenosine + L-methionine + A + S-adenosyl-L-homocysteine + 2 H(+). Its function is as follows. Catalyzes the methylthiolation of an aspartic acid residue of ribosomal protein uS12. The chain is Ribosomal protein uS12 methylthiotransferase RimO from Citrobacter koseri (strain ATCC BAA-895 / CDC 4225-83 / SGSC4696).